Consider the following 244-residue polypeptide: Agamous-like MADS-box protein AGL13 (244 aa).

The region spanning 3 to 57 (RGKVEVKRIENKITRQVTFSKRKSGLLKKAYELSVLCDAEVSLIIFSTGGKLYEF) is the MADS-box domain. The K-box domain maps to 85-175 (TQGLRQEVTK…KLETEDHDFK (91 aa)).

It is found in the nucleus. Probable transcription factor. This chain is Agamous-like MADS-box protein AGL13 (AGL13), found in Arabidopsis thaliana (Mouse-ear cress).